The chain runs to 37 residues: Cytochrome b6-f complex subunit 5 (37 aa).

A helical membrane pass occupies residues 5 to 25; the sequence is LLSGIVLGLIPITLAGLFVTA.

This sequence belongs to the PetG family. In terms of assembly, the 4 large subunits of the cytochrome b6-f complex are cytochrome b6, subunit IV (17 kDa polypeptide, PetD), cytochrome f and the Rieske protein, while the 4 small subunits are PetG, PetL, PetM and PetN. The complex functions as a dimer.

It is found in the plastid. The protein localises to the chloroplast thylakoid membrane. Its function is as follows. Component of the cytochrome b6-f complex, which mediates electron transfer between photosystem II (PSII) and photosystem I (PSI), cyclic electron flow around PSI, and state transitions. PetG is required for either the stability or assembly of the cytochrome b6-f complex. The protein is Cytochrome b6-f complex subunit 5 of Chara vulgaris (Common stonewort).